Consider the following 97-residue polypeptide: C-C motif chemokine 7 (97 aa).

The first 23 residues, 1–23 (MRISATLLCLLLIAAAFSIQVWA), serve as a signal peptide directing secretion. Residue Gln-24 is modified to Pyrrolidone carboxylic acid. N-linked (GlcNAc...) asparagine glycosylation is present at Asn-29. 2 cysteine pairs are disulfide-bonded: Cys-33-Cys-57 and Cys-34-Cys-73.

It belongs to the intercrine beta (chemokine CC) family. In terms of assembly, monomer. Interacts with TNFAIP6 (via Link domain).

Its subcellular location is the secreted. In terms of biological role, chemotactic factor that attracts monocytes and eosinophils, but not neutrophils. Augments monocyte anti-tumor activity. The protein is C-C motif chemokine 7 (Ccl7) of Mus musculus (Mouse).